The primary structure comprises 307 residues: MATH domain and coiled-coil domain-containing protein At3g58380 (307 aa).

The MATH domain occupies 6–132; it reads DKKFVWVIKD…CREITIVIEV (127 aa). Residues 238 to 290 are a coiled coil; sequence KVDWLEKKLKEVKEKKKNVDNGKARLQQIEEDLQKLNQKRLDLKDILDKEKAN.

This chain is MATH domain and coiled-coil domain-containing protein At3g58380, found in Arabidopsis thaliana (Mouse-ear cress).